A 436-amino-acid polypeptide reads, in one-letter code: Gamma-glutamyl phosphate reductase (436 aa).

It belongs to the gamma-glutamyl phosphate reductase family.

Its subcellular location is the cytoplasm. It carries out the reaction L-glutamate 5-semialdehyde + phosphate + NADP(+) = L-glutamyl 5-phosphate + NADPH + H(+). The protein operates within amino-acid biosynthesis; L-proline biosynthesis; L-glutamate 5-semialdehyde from L-glutamate: step 2/2. In terms of biological role, catalyzes the NADPH-dependent reduction of L-glutamate 5-phosphate into L-glutamate 5-semialdehyde and phosphate. The product spontaneously undergoes cyclization to form 1-pyrroline-5-carboxylate. The chain is Gamma-glutamyl phosphate reductase from Prochlorococcus marinus subsp. pastoris (strain CCMP1986 / NIES-2087 / MED4).